Here is a 417-residue protein sequence, read N- to C-terminus: Serine/threonine transporter SstT (417 aa).

The next 8 membrane-spanning stretches (helical) occupy residues 21-41, 49-69, 83-103, 142-162, 193-213, 218-238, 291-311, and 331-351; these read ILAGLIAGILLAWLAPEVAKM, FISALKAVAPVLVWVLVMASI, ILVLYLLATFFAALTAVVASF, ALINGNYMGILAWAIGLGLAL, IGIFGLVSSTIATTGFKALAG, LLVLIGCMLFVALVVNPLIVF, IPLGATINMGGAAITITILTL, and LVAAICACGASGVAGGSLLLI.

The protein belongs to the dicarboxylate/amino acid:cation symporter (DAACS) (TC 2.A.23) family.

It is found in the cell inner membrane. It catalyses the reaction L-serine(in) + Na(+)(in) = L-serine(out) + Na(+)(out). It carries out the reaction L-threonine(in) + Na(+)(in) = L-threonine(out) + Na(+)(out). Involved in the import of serine and threonine into the cell, with the concomitant import of sodium (symport system). The sequence is that of Serine/threonine transporter SstT from Proteus mirabilis (strain HI4320).